Reading from the N-terminus, the 513-residue chain is Probable histone deacetylase 19 (513 aa).

Residues arginine 23–glycine 334 are histone deacetylase. Histidine 154 (proton donor/acceptor) is an active-site residue. Zn(2+)-binding residues include aspartate 189, histidine 191, and aspartate 277. Disordered regions lie at residues histidine 384–arginine 432 and glutamate 446–proline 513. A compositionally biased stretch (acidic residues) spans glutamate 398–proline 409. Over residues aspartate 410 to arginine 432 the composition is skewed to basic and acidic residues. The segment covering asparagine 492–glutamine 504 has biased composition (polar residues).

The protein belongs to the histone deacetylase family. HD type 1 subfamily. Requires Zn(2+) as cofactor.

It localises to the nucleus. It carries out the reaction N(6)-acetyl-L-lysyl-[histone] + H2O = L-lysyl-[histone] + acetate. In terms of biological role, responsible for the deacetylation of lysine residues on the N-terminal part of the core histones (H2A, H2B, H3 and H4). Histone deacetylation gives a tag for epigenetic repression and plays an important role in transcriptional regulation, cell cycle progression and developmental events. Histone deacetylases act via the formation of large multiprotein complexes. The polypeptide is Probable histone deacetylase 19 (Zea mays (Maize)).